A 91-amino-acid polypeptide reads, in one-letter code: Probable Fe(2+)-trafficking protein (91 aa).

It belongs to the Fe(2+)-trafficking protein family.

Functionally, could be a mediator in iron transactions between iron acquisition and iron-requiring processes, such as synthesis and/or repair of Fe-S clusters in biosynthetic enzymes. The sequence is that of Probable Fe(2+)-trafficking protein from Histophilus somni (strain 129Pt) (Haemophilus somnus).